The sequence spans 956 residues: Glycine dehydrogenase (decarboxylating) (956 aa).

Position 697 is an N6-(pyridoxal phosphate)lysine (lysine 697).

It belongs to the GcvP family. The glycine cleavage system is composed of four proteins: P, T, L and H. It depends on pyridoxal 5'-phosphate as a cofactor.

It catalyses the reaction N(6)-[(R)-lipoyl]-L-lysyl-[glycine-cleavage complex H protein] + glycine + H(+) = N(6)-[(R)-S(8)-aminomethyldihydrolipoyl]-L-lysyl-[glycine-cleavage complex H protein] + CO2. Functionally, the glycine cleavage system catalyzes the degradation of glycine. The P protein binds the alpha-amino group of glycine through its pyridoxal phosphate cofactor; CO(2) is released and the remaining methylamine moiety is then transferred to the lipoamide cofactor of the H protein. This is Glycine dehydrogenase (decarboxylating) from Cereibacter sphaeroides (strain KD131 / KCTC 12085) (Rhodobacter sphaeroides).